The primary structure comprises 492 residues: Bifunctional purine biosynthesis protein PurH (492 aa).

The MGS-like domain occupies 1–144; the sequence is MKKAILSVSN…KNFKHVITVV (144 aa).

It belongs to the PurH family.

It catalyses the reaction (6R)-10-formyltetrahydrofolate + 5-amino-1-(5-phospho-beta-D-ribosyl)imidazole-4-carboxamide = 5-formamido-1-(5-phospho-D-ribosyl)imidazole-4-carboxamide + (6S)-5,6,7,8-tetrahydrofolate. The catalysed reaction is IMP + H2O = 5-formamido-1-(5-phospho-D-ribosyl)imidazole-4-carboxamide. It functions in the pathway purine metabolism; IMP biosynthesis via de novo pathway; 5-formamido-1-(5-phospho-D-ribosyl)imidazole-4-carboxamide from 5-amino-1-(5-phospho-D-ribosyl)imidazole-4-carboxamide (10-formyl THF route): step 1/1. It participates in purine metabolism; IMP biosynthesis via de novo pathway; IMP from 5-formamido-1-(5-phospho-D-ribosyl)imidazole-4-carboxamide: step 1/1. This is Bifunctional purine biosynthesis protein PurH from Staphylococcus saprophyticus subsp. saprophyticus (strain ATCC 15305 / DSM 20229 / NCIMB 8711 / NCTC 7292 / S-41).